Here is a 373-residue protein sequence, read N- to C-terminus: DNA replication and repair protein RecF (373 aa).

An ATP-binding site is contributed by 30–37 (GPNGQGKT).

The protein belongs to the RecF family.

Its subcellular location is the cytoplasm. The RecF protein is involved in DNA metabolism; it is required for DNA replication and normal SOS inducibility. RecF binds preferentially to single-stranded, linear DNA. It also seems to bind ATP. This is DNA replication and repair protein RecF from Streptomyces avermitilis (strain ATCC 31267 / DSM 46492 / JCM 5070 / NBRC 14893 / NCIMB 12804 / NRRL 8165 / MA-4680).